Here is a 288-residue protein sequence, read N- to C-terminus: Syntaxin-1A (288 aa).

The Cytoplasmic segment spans residues 1–265 (MKDRTQELRT…KYQSKARRKK (265 aa)). Phosphoserine is present on residues Ser14, Ser64, and Ser95. A coiled-coil region spans residues 68–109 (DEKTKEELEELMSDIKKTANKVRSKLKSIEQSIEQEEGLNRS). Ser188 carries the phosphoserine; by DAPK1 modification. Residues 192 to 254 (LSEIETRHSE…ERAVSDTKKA (63 aa)) form the t-SNARE coiled-coil homology domain. Glycyl lysine isopeptide (Lys-Gly) (interchain with G-Cter in SUMO) cross-links involve residues Lys252, Lys253, and Lys256. Residues 266-286 (IMIIICCVIPGIVIASTVGGI) traverse the membrane as a helical; Anchor for type IV membrane protein segment. At 287-288 (FA) the chain is on the extracellular side.

It belongs to the syntaxin family. In terms of assembly, part of the SNARE core complex containing SNAP25, VAMP2 and STX1A; this complex constitutes the basic catalytic machinery of the complex neurotransmitter release apparatus. The SNARE complex interacts with CPLX1. Interacts with STXBP1. The interaction with STXBP1 promotes assembly of the SNARE complex. Interacts (via C-terminus) with KCNB1 (via C-terminus); the interaction increases in a calcium-dependent manner and induces a pore-independent enhancement of exocytosis in neuroendocrine cells, chromaffin cells, pancreatic beta cells and from the soma of dorsal root ganglia (DRG) neurons. Interacts with SYTL4. Interacts with STXBP6. Interacts with PLCL1 (via C2 domain). Interacts with OTOF. Interacts with LGI3. Interacts (via the H3 domain) with SLC6A4 (via the N-terminus); this interaction regulates SLC4A6 channel conductance in thalamocortical neurons. Interacts with SYT6 and SYT8; the interaction is Ca(2+)-dependent. Interacts with VAMP8. Interacts with SNAP23. Interacts with VAPA and SYBU. Interacts with PRRT2. Interacts with SEPT8. Interacts with STXBP5L. Interacts with synaptotagmin-1/SYT1. Interacts with SEPTIN5; in the cerebellar cortex. Interacts with SEPTIN4; in the striatum. In terms of processing, phosphorylated by CK2. Phosphorylation at Ser-188 by DAPK1 significantly decreases its interaction with STXBP1. Post-translationally, sumoylated, sumoylation is required for regulation of synaptic vesicle endocytosis.

It localises to the cytoplasmic vesicle. The protein localises to the secretory vesicle. The protein resides in the synaptic vesicle membrane. Its subcellular location is the cell membrane. It is found in the synapse. It localises to the synaptosome. Its function is as follows. Plays an essential role in hormone and neurotransmitter calcium-dependent exocytosis and endocytosis. Part of the SNARE (Soluble NSF Attachment Receptor) complex composed of SNAP25, STX1A and VAMP2 which mediates the fusion of synaptic vesicles with the presynaptic plasma membrane. STX1A and SNAP25 are localized on the plasma membrane while VAMP2 resides in synaptic vesicles. The pairing of the three SNAREs from the N-terminal SNARE motifs to the C-terminal anchors leads to the formation of the SNARE complex, which brings membranes into close proximity and results in final fusion. Participates in the calcium-dependent regulation of acrosomal exocytosis in sperm. Also plays an important role in the exocytosis of hormones such as insulin or glucagon-like peptide 1 (GLP-1). This Pongo abelii (Sumatran orangutan) protein is Syntaxin-1A (STX1A).